The primary structure comprises 94 residues: Co-chaperonin GroES (94 aa).

It belongs to the GroES chaperonin family. In terms of assembly, heptamer of 7 subunits arranged in a ring. Interacts with the chaperonin GroEL.

It localises to the cytoplasm. Together with the chaperonin GroEL, plays an essential role in assisting protein folding. The GroEL-GroES system forms a nano-cage that allows encapsulation of the non-native substrate proteins and provides a physical environment optimized to promote and accelerate protein folding. GroES binds to the apical surface of the GroEL ring, thereby capping the opening of the GroEL channel. This chain is Co-chaperonin GroES, found in Clostridioides difficile (Peptoclostridium difficile).